The following is a 205-amino-acid chain: Proteasome subunit beta type-3 (205 aa).

Belongs to the peptidase T1B family. The 26S proteasome consists of a 20S proteasome core and two 19S regulatory subunits. The 20S proteasome core is composed of 28 subunits that are arranged in four stacked rings, resulting in a barrel-shaped structure. The two end rings are each formed by seven alpha subunits, and the two central rings are each formed by seven beta subunits. The catalytic chamber with the active sites is on the inside of the barrel.

The protein localises to the cytoplasm. It is found in the nucleus. Non-catalytic component of the proteasome, a multicatalytic proteinase complex which is characterized by its ability to cleave peptides with Arg, Phe, Tyr, Leu, and Glu adjacent to the leaving group at neutral or slightly basic pH. The proteasome has an ATP-dependent proteolytic activity. This is Proteasome subunit beta type-3 from Drosophila melanogaster (Fruit fly).